The sequence spans 315 residues: Ribose-phosphate pyrophosphokinase (315 aa).

ATP-binding positions include 37–39 and 96–97; these read DGE and RQ. Mg(2+) is bound by residues His131 and Asp171. The active site involves Lys195. D-ribose 5-phosphate-binding positions include Arg197, Asp221, and 225-229; that span reads DTGGT.

The protein belongs to the ribose-phosphate pyrophosphokinase family. Class I subfamily. As to quaternary structure, homohexamer. Requires Mg(2+) as cofactor.

Its subcellular location is the cytoplasm. It catalyses the reaction D-ribose 5-phosphate + ATP = 5-phospho-alpha-D-ribose 1-diphosphate + AMP + H(+). It participates in metabolic intermediate biosynthesis; 5-phospho-alpha-D-ribose 1-diphosphate biosynthesis; 5-phospho-alpha-D-ribose 1-diphosphate from D-ribose 5-phosphate (route I): step 1/1. In terms of biological role, involved in the biosynthesis of the central metabolite phospho-alpha-D-ribosyl-1-pyrophosphate (PRPP) via the transfer of pyrophosphoryl group from ATP to 1-hydroxyl of ribose-5-phosphate (Rib-5-P). The chain is Ribose-phosphate pyrophosphokinase from Haemophilus influenzae (strain ATCC 51907 / DSM 11121 / KW20 / Rd).